The sequence spans 411 residues: Arginine deiminase (411 aa).

Residue Cys401 is the Amidino-cysteine intermediate of the active site.

Belongs to the arginine deiminase family.

Its subcellular location is the cytoplasm. The enzyme catalyses L-arginine + H2O = L-citrulline + NH4(+). It participates in amino-acid degradation; L-arginine degradation via ADI pathway; carbamoyl phosphate from L-arginine: step 1/2. The sequence is that of Arginine deiminase from Staphylococcus aureus (strain MRSA252).